The primary structure comprises 452 residues: Phosphoglucosamine mutase (452 aa).

The Phosphoserine intermediate role is filled by Ser97. Residues Ser97, Asp236, Asp238, and Asp240 each coordinate Mg(2+). Ser97 is subject to Phosphoserine.

Belongs to the phosphohexose mutase family. The cofactor is Mg(2+). In terms of processing, activated by phosphorylation.

The catalysed reaction is alpha-D-glucosamine 1-phosphate = D-glucosamine 6-phosphate. Functionally, catalyzes the conversion of glucosamine-6-phosphate to glucosamine-1-phosphate. The sequence is that of Phosphoglucosamine mutase from Prochlorococcus marinus (strain MIT 9515).